We begin with the raw amino-acid sequence, 918 residues long: Hexokinase-1 (918 aa).

M1 is subject to N-acetylmethionine. A mitochondrial-binding peptide (MBP) region spans residues 1–10; the sequence is MIAAQLLAYY. 2 consecutive Hexokinase domains span residues 16–458 and 464–906; these read DDQV…MVTA and AEQH…LITA. Residues R30 and 84–89 contribute to the ATP site; that span reads DLGGSS. The interval 73–207 is hexokinase small subdomain 1; that stretch reads DGSEKGDFIA…DYDANIVAVV (135 aa). 84 to 91 serves as a coordination point for D-glucose 6-phosphate; it reads DLGGSSFR. D-glucose is bound by residues S155, 172 to 173, and 208 to 209; these read TK and ND. The hexokinase large subdomain 1 stretch occupies residues 208 to 447; that stretch reads NDTVGTMIDC…SDVRFLLSES (240 aa). The D-glucose 6-phosphate site is built by D209 and T232. D-glucose-binding positions include N235, E260, and 291–294; that span reads QRFE. S337 bears the Phosphoserine mark. Residue 413 to 415 coordinates D-glucose 6-phosphate; it reads DGS. Residues 425–426 and 532–537 each bind ATP; these read RR and DLGGTN. Residues 521–655 form a hexokinase small subdomain 2 region; the sequence is DGTEDGDFLA…EFDLDVVAVV (135 aa). 532–536 lines the D-glucose 6-phosphate pocket; that stretch reads DLGGT. D-glucose is bound by residues 603-604, 620-621, and 656-657; these read SF, TK, and ND. The interval 656-895 is hexokinase large subdomain 2; the sequence is NDTVGTMMTC…CNVSFLLSED (240 aa). The D-glucose 6-phosphate site is built by D657 and T680. T680 provides a ligand contact to ATP. D-glucose-binding positions include 682 to 683, E708, and E742; that span reads SN. ATP-binding positions include 747–748, 784–788, and 863–867; these read GI, TKFLS, and TLYKL. D-glucose 6-phosphate-binding positions include 861 to 863 and S897; that span reads DGT.

The protein belongs to the hexokinase family. In terms of assembly, monomer. Interacts with RABL2/RABL2A; binds preferentially to GTP-bound RABL2. Interacts with VDAC1. The HK1-VDAC1 complex interacts with ATF2. Interacts (via N-terminal spermatogenic cell-specific region) with PFKM (via C-terminus). Interacts with SMAD5.

It localises to the mitochondrion outer membrane. The protein localises to the cytoplasm. It is found in the cytosol. The enzyme catalyses a D-hexose + ATP = a D-hexose 6-phosphate + ADP + H(+). It catalyses the reaction D-fructose + ATP = D-fructose 6-phosphate + ADP + H(+). The catalysed reaction is D-glucose + ATP = D-glucose 6-phosphate + ADP + H(+). It carries out the reaction D-mannose + ATP = D-mannose 6-phosphate + ADP + H(+). The enzyme catalyses D-glucosamine + ATP = D-glucosamine 6-phosphate + ADP + H(+). It participates in carbohydrate metabolism; hexose metabolism. Its pathway is carbohydrate degradation; glycolysis; D-glyceraldehyde 3-phosphate and glycerone phosphate from D-glucose: step 1/4. With respect to regulation, hexokinase is an allosteric enzyme inhibited by its product D-glucose 6-phosphate. Hexokinase activity is inhibited by N-acetyl-D-glucosamine. Catalyzes the phosphorylation of various hexoses, such as D-glucose, D-glucosamine, D-fructose, D-mannose and 2-deoxy-D-glucose, to hexose 6-phosphate (D-glucose 6-phosphate, D-glucosamine 6-phosphate, D-fructose 6-phosphate, D-mannose 6-phosphate and 2-deoxy-D-glucose 6-phosphate, respectively). Does not phosphorylate N-acetyl-D-glucosamine. Mediates the initial step of glycolysis by catalyzing phosphorylation of D-glucose to D-glucose 6-phosphate. Involved in innate immunity and inflammation by acting as a pattern recognition receptor for bacterial peptidoglycan. When released in the cytosol, N-acetyl-D-glucosamine component of bacterial peptidoglycan inhibits the hexokinase activity of HK1 and causes its dissociation from mitochondrial outer membrane, thereby activating the NLRP3 inflammasome. This is Hexokinase-1 from Bos taurus (Bovine).